Reading from the N-terminus, the 388-residue chain is NADH-quinone oxidoreductase subunit D 2 (388 aa).

This sequence belongs to the complex I 49 kDa subunit family. NDH-1 is composed of 14 different subunits. Subunits NuoB, C, D, E, F, and G constitute the peripheral sector of the complex.

Its subcellular location is the cell membrane. It carries out the reaction a quinone + NADH + 5 H(+)(in) = a quinol + NAD(+) + 4 H(+)(out). NDH-1 shuttles electrons from NADH, via FMN and iron-sulfur (Fe-S) centers, to quinones in the respiratory chain. The immediate electron acceptor for the enzyme in this species is believed to be a menaquinone. Couples the redox reaction to proton translocation (for every two electrons transferred, four hydrogen ions are translocated across the cytoplasmic membrane), and thus conserves the redox energy in a proton gradient. This Salinispora tropica (strain ATCC BAA-916 / DSM 44818 / JCM 13857 / NBRC 105044 / CNB-440) protein is NADH-quinone oxidoreductase subunit D 2.